We begin with the raw amino-acid sequence, 2364 residues long: Actin-binding protein F (2364 aa).

Positions 138–157 (THQTSPTTETTTTPSSSSSS) are enriched in low complexity. Disordered regions lie at residues 138–168 (THQTSPTTETTTTPSSSSSSSHDDKSESTLD), 1087–1111 (QASKYNESEVKDEKSMRNRQVEKRR), 1412–1435 (NNNSNNNNNTTNSNSFGDAKRAPM), and 1929–2088 (KLIS…SEFN). The span at 1092–1111 (NESEVKDEKSMRNRQVEKRR) shows a compositional bias: basic and acidic residues. 2 stretches are compositionally biased toward low complexity: residues 1412 to 1428 (NNNSNNNNNTTNSNSFG) and 1932 to 1960 (SSSTTTDSKSTHSSVISSSSSSNLSTTTD). The stretch at 1960–2017 (DSSKDKKKLEKEEKQREKERKQKEKEDKKREKEELKKKEKEEKKKKEEEKKLKKKSGS) forms a coiled coil. A compositionally biased stretch (basic and acidic residues) spans 1961–2010 (SSKDKKKLEKEEKQREKERKQKEKEDKKREKEELKKKEKEEKKKKEEEKK). Residues 2027–2047 (ATPTTTTTTEATTTTTTTTAT) show a composition bias toward low complexity. Residues 2052 to 2070 (IKPEKIASDDEHDDHHHDE) are compositionally biased toward basic and acidic residues. The span at 2071–2081 (HDEEDDDDEPL) shows a compositional bias: acidic residues. A coiled-coil region spans residues 2129–2173 (VQRWNSLFKDLRNKVDQVSNKDSVEIDYEKEIDRERRQNKMASNE).

Interacts with actin.

The protein resides in the nucleus. It is found in the cytoplasm. Its subcellular location is the cytoskeleton. The polypeptide is Actin-binding protein F (abpF) (Dictyostelium discoideum (Social amoeba)).